Reading from the N-terminus, the 270-residue chain is Hemin import ATP-binding protein HmuV (270 aa).

The ABC transporter domain maps to 5-242 (LEAEAATYSV…SLINRVFDIE (238 aa)). Residue 37–44 (GPNGAGKS) coordinates ATP.

The protein belongs to the ABC transporter superfamily. Heme (hemin) importer (TC 3.A.1.14.5) family. In terms of assembly, the complex is composed of two ATP-binding proteins (HmuV), two transmembrane proteins (HmuU) and a solute-binding protein (HmuT).

It is found in the cell inner membrane. Its function is as follows. Part of the ABC transporter complex HmuTUV involved in hemin import. Responsible for energy coupling to the transport system. In Rhodopseudomonas palustris (strain BisA53), this protein is Hemin import ATP-binding protein HmuV.